The following is a 129-amino-acid chain: Succinate dehydrogenase cytochrome b556 subunit (129 aa).

At 1–26 (MIRNVKKQRPVNLDLQTIRFPITAIA) the chain is on the cytoplasmic side. Residues 27-52 (SILHRVSGVITFIAVGILLWLLGTSL) form a helical membrane-spanning segment. Over 53 to 68 (SSPEGFQQAADIMDGF) the chain is Periplasmic. The helical transmembrane segment at 69–89 (IVKFIMWGILTALAYHVIVGI) threads the bilayer. Residue histidine 84 coordinates heme. Residues 90–108 (RHMLMDFGYLEETFEAGQR) are Cytoplasmic-facing. A helical transmembrane segment spans residues 109-129 (SAKISFVITVVLSLLAGVLVW).

The protein belongs to the cytochrome b560 family. Part of an enzyme complex containing four subunits: a flavoprotein, an iron-sulfur protein, plus two membrane-anchoring proteins, SdhC and SdhD. The complex can form homotrimers. Heme serves as cofactor.

It localises to the cell inner membrane. It participates in carbohydrate metabolism; tricarboxylic acid cycle. Its function is as follows. Membrane-anchoring subunit of succinate dehydrogenase (SDH). This chain is Succinate dehydrogenase cytochrome b556 subunit (sdhC), found in Salmonella typhi.